Reading from the N-terminus, the 122-residue chain is Large ribosomal subunit protein uL14 (122 aa).

It belongs to the universal ribosomal protein uL14 family. As to quaternary structure, part of the 50S ribosomal subunit. Forms a cluster with proteins L3 and L19. In the 70S ribosome, L14 and L19 interact and together make contacts with the 16S rRNA in bridges B5 and B8.

Binds to 23S rRNA. Forms part of two intersubunit bridges in the 70S ribosome. This chain is Large ribosomal subunit protein uL14, found in Syntrophus aciditrophicus (strain SB).